A 189-amino-acid chain; its full sequence is MAQERRGSREDRQNREERDSEFVDKLVAINRVAKVVKGGRRFGFAALVVVGDQKGRVGFGHGKAREVPEAIRKATEAAKRDLIFVPLRGGRTLHHDVHGRHGAGKVLLRSAKPGTGIIAGGPMRAVFETLGVHDVVAKSTGSSNPYNMVRATFDALKNQMHPKDIAAQRGMKYATLQSRRVSAGVASEE.

The S5 DRBM domain occupies 22-85 (FVDKLVAINR…EAAKRDLIFV (64 aa)).

The protein belongs to the universal ribosomal protein uS5 family. As to quaternary structure, part of the 30S ribosomal subunit. Contacts proteins S4 and S8.

In terms of biological role, with S4 and S12 plays an important role in translational accuracy. Its function is as follows. Located at the back of the 30S subunit body where it stabilizes the conformation of the head with respect to the body. The protein is Small ribosomal subunit protein uS5 of Sinorhizobium medicae (strain WSM419) (Ensifer medicae).